The following is a 429-amino-acid chain: Histidinol dehydrogenase (429 aa).

3 residues coordinate NAD(+): Tyr-130, Gln-191, and Asn-214. Substrate-binding residues include Ser-237, Gln-259, and His-262. The Zn(2+) site is built by Gln-259 and His-262. Active-site proton acceptor residues include Glu-327 and His-328. Positions 328, 361, 415, and 420 each coordinate substrate. Residue Asp-361 participates in Zn(2+) binding. Residue His-420 coordinates Zn(2+).

The protein belongs to the histidinol dehydrogenase family. Zn(2+) is required as a cofactor.

It catalyses the reaction L-histidinol + 2 NAD(+) + H2O = L-histidine + 2 NADH + 3 H(+). Its pathway is amino-acid biosynthesis; L-histidine biosynthesis; L-histidine from 5-phospho-alpha-D-ribose 1-diphosphate: step 9/9. Functionally, catalyzes the sequential NAD-dependent oxidations of L-histidinol to L-histidinaldehyde and then to L-histidine. This Neisseria meningitidis serogroup A / serotype 4A (strain DSM 15465 / Z2491) protein is Histidinol dehydrogenase.